The primary structure comprises 190 residues: MLNVVIFGAPGSGKGTQSELIIKEYGLDHISTGDVLRGEMKAETELGKIAKDYIEKGQLVPDELIVDMLANVLDSKKPAKGVIFDGFPRTIPQAKALKKMLNERGTDVSVMLNLQVEEEELIKRLLERGKVSGRSDDNLETIKSRLDVYHTQTAPLADYYVGEGKHVAIKGMGTIEEIFGRIKEAVNNVK.

11-16 (GSGKGT) provides a ligand contact to ATP. The NMP stretch occupies residues 31–60 (STGDVLRGEMKAETELGKIAKDYIEKGQLV). Residues threonine 32, arginine 37, 58–60 (QLV), 86–89 (GFPR), and glutamine 93 each bind AMP. An LID region spans residues 127–137 (ERGKVSGRSDD). Arginine 128 lines the ATP pocket. AMP-binding residues include arginine 134 and arginine 145. Glycine 173 lines the ATP pocket.

It belongs to the adenylate kinase family. As to quaternary structure, monomer.

The protein localises to the cytoplasm. It carries out the reaction AMP + ATP = 2 ADP. It participates in purine metabolism; AMP biosynthesis via salvage pathway; AMP from ADP: step 1/1. Functionally, catalyzes the reversible transfer of the terminal phosphate group between ATP and AMP. Plays an important role in cellular energy homeostasis and in adenine nucleotide metabolism. In Parabacteroides distasonis (strain ATCC 8503 / DSM 20701 / CIP 104284 / JCM 5825 / NCTC 11152), this protein is Adenylate kinase.